We begin with the raw amino-acid sequence, 64 residues long: DNA-binding protein 7b (64 aa).

2 positions are modified to N6-methyllysine: Lys-5 and Lys-7.

Belongs to the 7 kDa DNA-binding/endoribonuclease P2 family. In terms of assembly, monomer. Lys-5 and Lys-7 may be methylated.

The protein localises to the cytoplasm. Functionally, can constrain negative DNA supercoils. May be involved in maintaining the integrity of the genome at high temperature. The chain is DNA-binding protein 7b from Saccharolobus shibatae (strain ATCC 51178 / DSM 5389 / JCM 8931 / NBRC 15437 / B12) (Sulfolobus shibatae).